We begin with the raw amino-acid sequence, 366 residues long: ADP-ribosylarginine hydrolase Tri1 (366 aa).

Positions 1–65 are N-terminal extension; sequence MIDLREDTWT…LNTPPCLIPE (65 aa). The tract at residues 74–366 is ADP-ribosyl hydrolase domain; that stretch reads GALVGLAIGD…LFYMAPEEDF (293 aa). Mg(2+) is bound by residues Thr116, Asp117, Asp118, Asp161, and Asp317.

This sequence belongs to the ADP-ribosylglycohydrolase family. As to quaternary structure, forms a stable complex with cognate effector protein Tre1-Sp. The cofactor is Mg(2+).

It carries out the reaction N(omega)-(ADP-D-ribosyl)-L-arginyl-[protein] + H2O = ADP-D-ribose + L-arginyl-[protein]. Immunity component of a contact-dependent interbacterial competition system (also called effector-immunity systems). Acts as an arginine mono-ADP-ribosylhydrolase, mediating the removal of mono-ADP-ribose attached to arginine residues on proteins. De-ADP-ribosylates FtsZ, is able to act on other proteins as well. Neutralizes the toxic activity of cognate toxin Tre1-Sp. Expression of this protein alone in E.coli partially protects the cells against competition by wild-type S.proteamaculans. Neutralizes Tre1-Sp both by occluding its active site via its N-terminal extension and by hydrolyzing the ADP-ribosyl moiety from FtsZ; the 2 activities are dissociable by mutagenesis. This is ADP-ribosylarginine hydrolase Tri1 from Serratia proteamaculans (strain 568).